The chain runs to 360 residues: UDP-N-acetylglucosamine--N-acetylmuramyl-(pentapeptide) pyrophosphoryl-undecaprenol N-acetylglucosamine transferase (360 aa).

Residues 16-18 (TGG), asparagine 128, arginine 165, serine 191, isoleucine 247, 266-271 (ALTVSE), and glutamine 292 contribute to the UDP-N-acetyl-alpha-D-glucosamine site.

This sequence belongs to the glycosyltransferase 28 family. MurG subfamily.

The protein localises to the cell inner membrane. It carries out the reaction di-trans,octa-cis-undecaprenyl diphospho-N-acetyl-alpha-D-muramoyl-L-alanyl-D-glutamyl-meso-2,6-diaminopimeloyl-D-alanyl-D-alanine + UDP-N-acetyl-alpha-D-glucosamine = di-trans,octa-cis-undecaprenyl diphospho-[N-acetyl-alpha-D-glucosaminyl-(1-&gt;4)]-N-acetyl-alpha-D-muramoyl-L-alanyl-D-glutamyl-meso-2,6-diaminopimeloyl-D-alanyl-D-alanine + UDP + H(+). It functions in the pathway cell wall biogenesis; peptidoglycan biosynthesis. Functionally, cell wall formation. Catalyzes the transfer of a GlcNAc subunit on undecaprenyl-pyrophosphoryl-MurNAc-pentapeptide (lipid intermediate I) to form undecaprenyl-pyrophosphoryl-MurNAc-(pentapeptide)GlcNAc (lipid intermediate II). This Shewanella amazonensis (strain ATCC BAA-1098 / SB2B) protein is UDP-N-acetylglucosamine--N-acetylmuramyl-(pentapeptide) pyrophosphoryl-undecaprenol N-acetylglucosamine transferase.